The sequence spans 490 residues: Betaine aldehyde dehydrogenase (490 aa).

I27 and D93 together coordinate K(+). G150–W152 is a binding site for NAD(+). The active-site Charge relay system is the K162. NAD(+) is bound at residue K176–E179. Residue V180 participates in K(+) binding. G230–T233 is an NAD(+) binding site. Residue L246 participates in K(+) binding. The active-site Proton acceptor is the E252. The NAD(+) site is built by G254, C286, and E387. Catalysis depends on C286, which acts as the Nucleophile. C286 is modified (cysteine sulfenic acid (-SOH)). The K(+) site is built by K457 and G460. Residue E464 is the Charge relay system of the active site.

Belongs to the aldehyde dehydrogenase family. Dimer of dimers. K(+) is required as a cofactor.

The catalysed reaction is betaine aldehyde + NAD(+) + H2O = glycine betaine + NADH + 2 H(+). The protein operates within amine and polyamine biosynthesis; betaine biosynthesis via choline pathway; betaine from betaine aldehyde: step 1/1. Involved in the biosynthesis of the osmoprotectant glycine betaine. Catalyzes the irreversible oxidation of betaine aldehyde to the corresponding acid. The chain is Betaine aldehyde dehydrogenase from Pseudomonas putida (strain ATCC 700007 / DSM 6899 / JCM 31910 / BCRC 17059 / LMG 24140 / F1).